The sequence spans 277 residues: Phosphonates import ATP-binding protein PhnC 2 (277 aa).

The ABC transporter domain occupies 5 to 253; the sequence is IHVQGLNKTF…FLNDLYGADA (249 aa). Residue 37 to 44 coordinates ATP; the sequence is GASGSGKS.

Belongs to the ABC transporter superfamily. Phosphonates importer (TC 3.A.1.9.1) family. In terms of assembly, the complex is composed of two ATP-binding proteins (PhnC), two transmembrane proteins (PhnE) and a solute-binding protein (PhnD).

The protein resides in the cell inner membrane. The enzyme catalyses phosphonate(out) + ATP + H2O = phosphonate(in) + ADP + phosphate + H(+). Functionally, part of the ABC transporter complex PhnCDE involved in phosphonates import. Responsible for energy coupling to the transport system. This chain is Phosphonates import ATP-binding protein PhnC 2, found in Pseudomonas savastanoi pv. phaseolicola (strain 1448A / Race 6) (Pseudomonas syringae pv. phaseolicola (strain 1448A / Race 6)).